We begin with the raw amino-acid sequence, 365 residues long: Carbamoyl phosphate synthase small chain (365 aa).

CPSase regions lie at residues 1–166 (MKRQ…PSPG) and 1–169 (MKRQ…GRGH). Residues Ser45, Gly218, and Gly220 each coordinate L-glutamine. The Glutamine amidotransferase type-1 domain occupies 170 to 357 (RVVLVDFGMK…LTMIENFKKE (188 aa)). The active-site Nucleophile is the Cys245. Positions 246, 249, 287, 289, and 290 each coordinate L-glutamine. Catalysis depends on residues His330 and Glu332.

The protein belongs to the CarA family. In terms of assembly, composed of two chains; the small (or glutamine) chain promotes the hydrolysis of glutamine to ammonia, which is used by the large (or ammonia) chain to synthesize carbamoyl phosphate. Tetramer of heterodimers (alpha,beta)4.

The enzyme catalyses hydrogencarbonate + L-glutamine + 2 ATP + H2O = carbamoyl phosphate + L-glutamate + 2 ADP + phosphate + 2 H(+). The catalysed reaction is L-glutamine + H2O = L-glutamate + NH4(+). Its pathway is amino-acid biosynthesis; L-arginine biosynthesis; carbamoyl phosphate from bicarbonate: step 1/1. The protein operates within pyrimidine metabolism; UMP biosynthesis via de novo pathway; (S)-dihydroorotate from bicarbonate: step 1/3. Functionally, small subunit of the glutamine-dependent carbamoyl phosphate synthetase (CPSase). CPSase catalyzes the formation of carbamoyl phosphate from the ammonia moiety of glutamine, carbonate, and phosphate donated by ATP, constituting the first step of 2 biosynthetic pathways, one leading to arginine and/or urea and the other to pyrimidine nucleotides. The small subunit (glutamine amidotransferase) binds and cleaves glutamine to supply the large subunit with the substrate ammonia. This chain is Carbamoyl phosphate synthase small chain, found in Bacillus anthracis.